A 306-amino-acid chain; its full sequence is Agmatinase (306 aa).

The Mn(2+) site is built by histidine 126, aspartate 149, histidine 151, aspartate 153, aspartate 230, and aspartate 232.

It belongs to the arginase family. Agmatinase subfamily. Requires Mn(2+) as cofactor.

The catalysed reaction is agmatine + H2O = urea + putrescine. The protein operates within amine and polyamine biosynthesis; putrescine biosynthesis via agmatine pathway; putrescine from agmatine: step 1/1. Its function is as follows. Catalyzes the formation of putrescine from agmatine. The polypeptide is Agmatinase (Escherichia coli O1:K1 / APEC).